Consider the following 260-residue polypeptide: DNA repair protein RecO (260 aa).

Belongs to the RecO family.

Functionally, involved in DNA repair and RecF pathway recombination. The protein is DNA repair protein RecO of Levilactobacillus brevis (strain ATCC 367 / BCRC 12310 / CIP 105137 / JCM 1170 / LMG 11437 / NCIMB 947 / NCTC 947) (Lactobacillus brevis).